Reading from the N-terminus, the 507-residue chain is MEELQRYLKMDRSRERDFLYSLLFQEYIYALAHDFGLTKSIPYESMQILSYDNKYSSLIVKRLIIRMYQQKHLIILDNDSKNKNFLGHNKNLYSQMISEGFAVIVEIPFALRLVSSYQGKEIEKSINLGSIHSTFPFLEDKFVHLNHVLNILIPYPIHFELIVQNLRCWIQDASFLHLLRFFLYEYHNWNSFTTQKMKQNSLFLKENRRFFLFLYNFHVYESESIFLFLRKKSYHLRSTSSIAFLDRTHFFGKIEHLKVVFRNDFHTMLWLFKDPFMHYFRYQGKSIMSSKGTPLLMKKWKYYLVNLWECHFYFWSQPNRIHINQLSNIFLNFLGYLSSVRPNPSVVRNQMLENAFIIDISRNKLSTLVPIIPLIGSLAKAKFCNLSGQPISKPAWTDSLDSDIIDRFGRICRNVSHYYSGSSKKKTLYRIKYILRLSCARTLARKHKSTVRSFLKRLGSEFLEEFLIEEEQVLSFILPKISSSSQRLSKERIWYFDIIRINDLMDL.

Belongs to the intron maturase 2 family. MatK subfamily.

The protein localises to the plastid. It is found in the chloroplast. Its function is as follows. Usually encoded in the trnK tRNA gene intron. Probably assists in splicing its own and other chloroplast group II introns. The sequence is that of Maturase K from Ranunculus macranthus (Large buttercup).